A 92-amino-acid chain; its full sequence is Large ribosomal subunit protein bL25 (92 aa).

Belongs to the bacterial ribosomal protein bL25 family. Part of the 50S ribosomal subunit; part of the 5S rRNA/L5/L18/L25 subcomplex. Contacts the 5S rRNA. Binds to the 5S rRNA independently of L5 and L18.

Functionally, this is one of the proteins that binds to the 5S RNA in the ribosome where it forms part of the central protuberance. The protein is Large ribosomal subunit protein bL25 of Vibrio atlanticus (strain LGP32) (Vibrio splendidus (strain Mel32)).